A 400-amino-acid polypeptide reads, in one-letter code: 3-phenylpropionate/cinnamic acid dioxygenase ferredoxin--NAD(+) reductase component (400 aa).

5–36 contacts FAD; that stretch reads TIIIVGGGQAAAMAAASLRQQGFTGELHLFSD. 146 to 174 is an NAD(+) binding site; the sequence is SVVIIGAGTIGLELAASATQRRCKVTVIE.

Belongs to the bacterial ring-hydroxylating dioxygenase ferredoxin reductase family. As to quaternary structure, this dioxygenase system consists of four proteins: the two subunits of the hydroxylase component (HcaE and HcaF), a ferredoxin (HcaC) and a ferredoxin reductase (HcaD). Requires FAD as cofactor.

It catalyses the reaction 2 reduced [2Fe-2S]-[ferredoxin] + NAD(+) + H(+) = 2 oxidized [2Fe-2S]-[ferredoxin] + NADH. It functions in the pathway aromatic compound metabolism; 3-phenylpropanoate degradation. Functionally, part of the multicomponent 3-phenylpropionate dioxygenase, that converts 3-phenylpropionic acid (PP) and cinnamic acid (CI) into 3-phenylpropionate-dihydrodiol (PP-dihydrodiol) and cinnamic acid-dihydrodiol (CI-dihydrodiol), respectively. This chain is 3-phenylpropionate/cinnamic acid dioxygenase ferredoxin--NAD(+) reductase component, found in Escherichia coli (strain K12 / MC4100 / BW2952).